A 197-amino-acid chain; its full sequence is Holliday junction branch migration complex subunit RuvA (197 aa).

The segment at methionine 1–valine 63 is domain I. Residues asparagine 64 to leucine 142 form a domain II region. The flexible linker stretch occupies residues leucine 142–proline 146. The segment at alanine 147 to lysine 197 is domain III.

This sequence belongs to the RuvA family. In terms of assembly, homotetramer. Forms an RuvA(8)-RuvB(12)-Holliday junction (HJ) complex. HJ DNA is sandwiched between 2 RuvA tetramers; dsDNA enters through RuvA and exits via RuvB. An RuvB hexamer assembles on each DNA strand where it exits the tetramer. Each RuvB hexamer is contacted by two RuvA subunits (via domain III) on 2 adjacent RuvB subunits; this complex drives branch migration. In the full resolvosome a probable DNA-RuvA(4)-RuvB(12)-RuvC(2) complex forms which resolves the HJ.

It is found in the cytoplasm. In terms of biological role, the RuvA-RuvB-RuvC complex processes Holliday junction (HJ) DNA during genetic recombination and DNA repair, while the RuvA-RuvB complex plays an important role in the rescue of blocked DNA replication forks via replication fork reversal (RFR). RuvA specifically binds to HJ cruciform DNA, conferring on it an open structure. The RuvB hexamer acts as an ATP-dependent pump, pulling dsDNA into and through the RuvAB complex. HJ branch migration allows RuvC to scan DNA until it finds its consensus sequence, where it cleaves and resolves the cruciform DNA. This is Holliday junction branch migration complex subunit RuvA from Lactococcus lactis subsp. lactis (strain IL1403) (Streptococcus lactis).